Consider the following 101-residue polypeptide: Gamma-secretase subunit PEN-2 (101 aa).

The Cytoplasmic segment spans residues 1 to 17 (MNLERIPNEEKLSLCRR). The segment at residues 18–36 (YYLGGFAFLPFLWLVNILW) is an intramembrane region (helical). Topologically, residues 37-57 (FFKEAFLKPAYTEQPQIKSYV) are cytoplasmic. The chain crosses the membrane as a helical span at residues 58–78 (KKSALGLLLWVAVLTTWITVF). At 79–101 (QHFRAQWGEVGDYLSFTIPLGTA) the chain is on the lumenal side.

Belongs to the PEN-2 family. In terms of assembly, the functional gamma-secretase complex is composed of at least four polypeptides: a presenilin homodimer (psen1 or psen2), nicastrin (ncstn), aph1 (aph1a or aph1b) and psenen.

The protein localises to the endoplasmic reticulum membrane. Its subcellular location is the golgi apparatus. It localises to the golgi stack membrane. It is found in the cell membrane. The protein resides in the membrane. Its function is as follows. Essential subunit of the gamma-secretase complex, an endoprotease complex that catalyzes the intramembrane cleavage of integral membrane proteins such as Notch receptors and APP (amyloid-beta precursor protein). The gamma-secretase complex plays a role in Notch and Wnt signaling cascades and regulation of downstream processes via its role in processing key regulatory proteins. The chain is Gamma-secretase subunit PEN-2 (psenen) from Danio rerio (Zebrafish).